The following is a 147-amino-acid chain: uncharacterized protein (147 aa).

The helical transmembrane segment at 71-91 (IDILAFVAGTVGVGSLVLLQF) threads the bilayer.

It localises to the virion. The protein resides in the host membrane. This is an uncharacterized protein from Acanthamoeba polyphaga mimivirus (APMV).